A 699-amino-acid chain; its full sequence is Polyribonucleotide nucleotidyltransferase (699 aa).

Mg(2+) is bound by residues Asp-488 and Asp-494. The 60-residue stretch at 555–614 folds into the KH domain; it reads PRIYSIKVNPDKIKDVIGKGGSVIRSLTEETNTIIDIEDNGIIKIVALDYDKAKQAIRRI. In terms of domain architecture, S1 motif spans 624-692; the sequence is GAVYTGKVSH…RQGRIRLSMK (69 aa).

The protein belongs to the polyribonucleotide nucleotidyltransferase family. Component of the RNA degradosome, which is a multiprotein complex involved in RNA processing and mRNA degradation. Requires Mg(2+) as cofactor.

Its subcellular location is the cytoplasm. It carries out the reaction RNA(n+1) + phosphate = RNA(n) + a ribonucleoside 5'-diphosphate. Involved in mRNA degradation. Catalyzes the phosphorolysis of single-stranded polyribonucleotides processively in the 3'- to 5'-direction. In Blochmanniella pennsylvanica (strain BPEN), this protein is Polyribonucleotide nucleotidyltransferase.